A 195-amino-acid chain; its full sequence is Sec-independent protein translocase protein TatB (195 aa).

The chain crosses the membrane as a helical span at residues 1–21 (MFDIGFSELALIAVVALVVLG). The segment at 130 to 195 (EPGSAQPHTP…SSTSPQEKTP (66 aa)) is disordered. Composition is skewed to low complexity over residues 145–157 (PVVA…APAP) and 175–195 (TTHA…EKTP).

The protein belongs to the TatB family. The Tat system comprises two distinct complexes: a TatABC complex, containing multiple copies of TatA, TatB and TatC subunits, and a separate TatA complex, containing only TatA subunits. Substrates initially bind to the TatABC complex, which probably triggers association of the separate TatA complex to form the active translocon.

Its subcellular location is the cell inner membrane. Functionally, part of the twin-arginine translocation (Tat) system that transports large folded proteins containing a characteristic twin-arginine motif in their signal peptide across membranes. Together with TatC, TatB is part of a receptor directly interacting with Tat signal peptides. TatB may form an oligomeric binding site that transiently accommodates folded Tat precursor proteins before their translocation. This Xanthomonas campestris pv. campestris (strain 8004) protein is Sec-independent protein translocase protein TatB.